Reading from the N-terminus, the 350-residue chain is UDP-3-O-acylglucosamine N-acyltransferase (350 aa).

The Proton acceptor role is filled by His-251.

It belongs to the transferase hexapeptide repeat family. LpxD subfamily. Homotrimer.

It carries out the reaction a UDP-3-O-[(3R)-3-hydroxyacyl]-alpha-D-glucosamine + a (3R)-hydroxyacyl-[ACP] = a UDP-2-N,3-O-bis[(3R)-3-hydroxyacyl]-alpha-D-glucosamine + holo-[ACP] + H(+). Its pathway is bacterial outer membrane biogenesis; LPS lipid A biosynthesis. Its function is as follows. Catalyzes the N-acylation of UDP-3-O-acylglucosamine using 3-hydroxyacyl-ACP as the acyl donor. Is involved in the biosynthesis of lipid A, a phosphorylated glycolipid that anchors the lipopolysaccharide to the outer membrane of the cell. The protein is UDP-3-O-acylglucosamine N-acyltransferase of Prochlorococcus marinus (strain NATL2A).